The sequence spans 480 residues: RuvB-like helicase 2 (480 aa).

73 to 80 (GEPSTGKT) lines the ATP pocket.

This sequence belongs to the RuvB family. As to quaternary structure, forms homohexameric rings. May form a dodecamer with rept made of two stacked hexameric rings. Component of the chromatin remodeling Ino80 complex.

Its subcellular location is the nucleus. The catalysed reaction is ATP + H2O = ADP + phosphate + H(+). Acts as a transcriptional coactivator in Wg signaling caused by altered arm signaling. Pont and rept interfere antagonistically with nuclear arm signaling function, and are required to enhance or reduce arm activity, respectively. Also an essential cofactor for the normal function of Myc; required for cellular proliferation and growth. Functionally, proposed core component of the chromatin remodeling Ino80 complex which is involved in transcriptional regulation, DNA replication and probably DNA repair. This chain is RuvB-like helicase 2, found in Drosophila pseudoobscura pseudoobscura (Fruit fly).